Consider the following 137-residue polypeptide: Chaperone protein YscB (137 aa).

In terms of assembly, interacts with SycN to form a complex which specifically binds to YopN.

It is found in the cytoplasm. Its subcellular location is the cell inner membrane. In terms of biological role, functions as a specific chaperone for YopN. It could facilitate the secretion and the subsequent translocation of YopN. The sequence is that of Chaperone protein YscB (yscB) from Yersinia enterocolitica.